Here is a 383-residue protein sequence, read N- to C-terminus: Putative glutamate--cysteine ligase 2-2 (383 aa).

Belongs to the glutamate--cysteine ligase type 2 family. YbdK subfamily.

It carries out the reaction L-cysteine + L-glutamate + ATP = gamma-L-glutamyl-L-cysteine + ADP + phosphate + H(+). In terms of biological role, ATP-dependent carboxylate-amine ligase which exhibits weak glutamate--cysteine ligase activity. The polypeptide is Putative glutamate--cysteine ligase 2-2 (Paenarthrobacter aurescens (strain TC1)).